The chain runs to 132 residues: Small ribosomal subunit protein uS8 (132 aa).

This sequence belongs to the universal ribosomal protein uS8 family. In terms of assembly, part of the 30S ribosomal subunit. Contacts proteins S5 and S12.

Functionally, one of the primary rRNA binding proteins, it binds directly to 16S rRNA central domain where it helps coordinate assembly of the platform of the 30S subunit. This is Small ribosomal subunit protein uS8 from Caulobacter vibrioides (strain ATCC 19089 / CIP 103742 / CB 15) (Caulobacter crescentus).